The following is a 550-amino-acid chain: Chaperonin GroEL 1 (550 aa).

ATP contacts are provided by residues 30-33 (TLGP), K51, 87-91 (DGTTT), G415, and D496.

It belongs to the chaperonin (HSP60) family. As to quaternary structure, forms a cylinder of 14 subunits composed of two heptameric rings stacked back-to-back. Interacts with the co-chaperonin GroES.

The protein resides in the cytoplasm. The enzyme catalyses ATP + H2O + a folded polypeptide = ADP + phosphate + an unfolded polypeptide.. Together with its co-chaperonin GroES, plays an essential role in assisting protein folding. The GroEL-GroES system forms a nano-cage that allows encapsulation of the non-native substrate proteins and provides a physical environment optimized to promote and accelerate protein folding. This chain is Chaperonin GroEL 1, found in Rhodopseudomonas palustris (strain HaA2).